The following is a 374-amino-acid chain: N5-carboxyaminoimidazole ribonucleotide synthase (374 aa).

ATP contacts are provided by residues Arg-108, Lys-148, 153–159 (GYDGKGQ), 183–186 (EKYL), Glu-191, His-214, and 266–267 (NE). Residues 112–296 (KETLKSAGTK…QFDTHILAVT (185 aa)) enclose the ATP-grasp domain.

It belongs to the PurK/PurT family. In terms of assembly, homodimer.

It carries out the reaction 5-amino-1-(5-phospho-beta-D-ribosyl)imidazole + hydrogencarbonate + ATP = 5-carboxyamino-1-(5-phospho-D-ribosyl)imidazole + ADP + phosphate + 2 H(+). The protein operates within purine metabolism; IMP biosynthesis via de novo pathway; 5-amino-1-(5-phospho-D-ribosyl)imidazole-4-carboxylate from 5-amino-1-(5-phospho-D-ribosyl)imidazole (N5-CAIR route): step 1/2. Functionally, catalyzes the ATP-dependent conversion of 5-aminoimidazole ribonucleotide (AIR) and HCO(3)(-) to N5-carboxyaminoimidazole ribonucleotide (N5-CAIR). The chain is N5-carboxyaminoimidazole ribonucleotide synthase from Staphylococcus aureus (strain COL).